We begin with the raw amino-acid sequence, 514 residues long: Lysine--tRNA ligase (514 aa).

Positions 1-13 (MSKPNNQNQQNNQ) are enriched in low complexity. Residues 1-21 (MSKPNNQNQQNNQEPAPEDAN) are disordered. Residues Glu422 and Glu429 each contribute to the Mg(2+) site.

The protein belongs to the class-II aminoacyl-tRNA synthetase family. In terms of assembly, homodimer. Mg(2+) is required as a cofactor.

Its subcellular location is the cytoplasm. It catalyses the reaction tRNA(Lys) + L-lysine + ATP = L-lysyl-tRNA(Lys) + AMP + diphosphate. The protein is Lysine--tRNA ligase of Psychrobacter cryohalolentis (strain ATCC BAA-1226 / DSM 17306 / VKM B-2378 / K5).